Consider the following 131-residue polypeptide: Small ribosomal subunit protein uS11 (131 aa).

The protein belongs to the universal ribosomal protein uS11 family. As to quaternary structure, part of the 30S ribosomal subunit. Interacts with proteins S7 and S18. Binds to IF-3.

Its function is as follows. Located on the platform of the 30S subunit, it bridges several disparate RNA helices of the 16S rRNA. Forms part of the Shine-Dalgarno cleft in the 70S ribosome. In Syntrophotalea carbinolica (strain DSM 2380 / NBRC 103641 / GraBd1) (Pelobacter carbinolicus), this protein is Small ribosomal subunit protein uS11.